The following is a 991-amino-acid chain: 5'-3' exoribonuclease 2 (991 aa).

A Nuclear localization signal motif is present at residues 264–268 (TKKTK). The segment covering 404-418 (RRNENYRRRQQRESN) has biased composition (basic and acidic residues). 3 disordered regions span residues 404–461 (RRNE…TQKI), 547–582 (SIES…ENTD), and 872–991 (AERS…NGYY). Residues 433–452 (SVETQSTEVVTSSKSTSVDT) show a composition bias toward low complexity. Composition is skewed to low complexity over residues 878–889 (SRRNNGNSYRGG) and 896–910 (RRSY…RQSY). A compositionally biased stretch (polar residues) spans 926-938 (WSGNGNFPRSNAS). Gly residues predominate over residues 946 to 958 (EGYGGRSRGGGYS). Positions 980–991 (ESYNNNNRNGYY) are enriched in polar residues.

Belongs to the 5'-3' exonuclease family. XRN2/RAT1 subfamily. As to quaternary structure, interacts with din1/rai1; the interaction is direct, stabilizes dhp1 protein structure and may stimulate its exoribonuclease activity. The interaction also stimulates din1 pyrophosphohydrolase activity, probably by recruiting it to mRNA substrates.

It localises to the nucleus. In terms of biological role, possesses 5'-&gt;3' exoribonuclease activity. Required for the processing of nuclear mRNA and rRNA precursors. May promote the termination of transcription by RNA polymerase II. Essential for vegetative cell growth and chromosome segregation. The polypeptide is 5'-3' exoribonuclease 2 (dhp1) (Schizosaccharomyces pombe (strain 972 / ATCC 24843) (Fission yeast)).